The sequence spans 432 residues: Alpha-2 adrenergic receptor (432 aa).

Over 1–32 the chain is Extracellular; sequence MDPLNATGMDAFTAIHLNASWSADSGYSLAAI. Residues Asn-5 and Asn-18 are each glycosylated (N-linked (GlcNAc...) asparagine). A helical membrane pass occupies residues 33–57; the sequence is ASIAALVSFLILFTVVGNILVVIAV. Residues 58-69 lie on the Cytoplasmic side of the membrane; that stretch reads LTSRALKAPQNL. A helical transmembrane segment spans residues 70 to 95; the sequence is FLVSLATADILVATLVMPFSLANELM. Over 96–105 the chain is Extracellular; it reads GYWYFGKVWC. An intrachain disulfide couples Cys-105 to Cys-183. A helical membrane pass occupies residues 106-128; it reads GIYLALDVLFCTSSIVHLCAISL. Residues 129–149 are Cytoplasmic-facing; sequence DRYWSVTQAVEYNLKRTPKRV. The helical transmembrane segment at 150-172 threads the bilayer; the sequence is KCIIVIVWLISAFISSPPLLSID. Residues 173-188 are Extracellular-facing; it reads SNNYISSQPQCMLNDD. The helical transmembrane segment at 189–212 threads the bilayer; the sequence is TWYILSSSMASFFAPCLIMILVYI. Topologically, residues 213–356 are cytoplasmic; the sequence is RIYQVAKTRT…QAREKRFTFV (144 aa). A disordered region spans residues 222 to 319; that stretch reads TRSMSGKEPR…SISKQSARIS (98 aa). Polar residues-rich tracts occupy residues 235 to 246 and 265 to 275; these read VTQTENGLNKAN and SQRTVTIGQQT. Positions 288 to 300 are enriched in basic and acidic residues; it reads GKGHKPQRQDSQR. Over residues 309-319 the composition is skewed to polar residues; the sequence is SSISKQSARIS. A helical membrane pass occupies residues 357–380; it reads LAVVMGVFVVCWFPFFFSYSLHAV. Topologically, residues 381 to 393 are extracellular; that stretch reads CRDYCKIPDTLFK. A helical transmembrane segment spans residues 394–413; the sequence is FFWIGYCNSSLNPAIYTIFN. Residues 414–432 are Cytoplasmic-facing; sequence RDFRRAFQKILCKSWKKSF.

The protein belongs to the G-protein coupled receptor 1 family.

Its subcellular location is the cell membrane. Functionally, alpha-2 adrenergic receptors mediate the catecholamine-induced inhibition of adenylate cyclase through the action of G proteins. This Labrus ossifagus (Cuckoo wrasse) protein is Alpha-2 adrenergic receptor.